Reading from the N-terminus, the 342-residue chain is UDP-3-O-acylglucosamine N-acyltransferase (342 aa).

Histidine 253 functions as the Proton acceptor in the catalytic mechanism.

It belongs to the transferase hexapeptide repeat family. LpxD subfamily. As to quaternary structure, homotrimer.

It carries out the reaction a UDP-3-O-[(3R)-3-hydroxyacyl]-alpha-D-glucosamine + a (3R)-hydroxyacyl-[ACP] = a UDP-2-N,3-O-bis[(3R)-3-hydroxyacyl]-alpha-D-glucosamine + holo-[ACP] + H(+). The protein operates within bacterial outer membrane biogenesis; LPS lipid A biosynthesis. Functionally, catalyzes the N-acylation of UDP-3-O-acylglucosamine using 3-hydroxyacyl-ACP as the acyl donor. Is involved in the biosynthesis of lipid A, a phosphorylated glycolipid that anchors the lipopolysaccharide to the outer membrane of the cell. This Rickettsia canadensis (strain McKiel) protein is UDP-3-O-acylglucosamine N-acyltransferase.